Consider the following 181-residue polypeptide: Shikimate kinase (181 aa).

23–28 (GTGKST) is an ATP binding site. S27 is a binding site for Mg(2+). D45, R69, and G91 together coordinate substrate. ATP is bound at residue R129. A substrate-binding site is contributed by R148.

Belongs to the shikimate kinase family. As to quaternary structure, monomer. Mg(2+) is required as a cofactor.

The protein localises to the cytoplasm. The catalysed reaction is shikimate + ATP = 3-phosphoshikimate + ADP + H(+). The protein operates within metabolic intermediate biosynthesis; chorismate biosynthesis; chorismate from D-erythrose 4-phosphate and phosphoenolpyruvate: step 5/7. Its function is as follows. Catalyzes the specific phosphorylation of the 3-hydroxyl group of shikimic acid using ATP as a cosubstrate. The sequence is that of Shikimate kinase from Geobacter sulfurreducens (strain ATCC 51573 / DSM 12127 / PCA).